We begin with the raw amino-acid sequence, 187 residues long: Putative acyl-coenzyme A oxidase At3g06690 (187 aa).

The interval 1–21 (MTKEPIYSPRMLHRDPDSPRP) is disordered.

It belongs to the acyl-CoA oxidase family.

The catalysed reaction is a 2,3-saturated acyl-CoA + O2 = a (2E)-enoyl-CoA + H2O2. The polypeptide is Putative acyl-coenzyme A oxidase At3g06690 (Arabidopsis thaliana (Mouse-ear cress)).